A 511-amino-acid chain; its full sequence is BAR/IMD domain-containing adapter protein 2-like 1 (511 aa).

The IMD domain occupies 1 to 249 (MSRGPEEVNR…MNMIEEIKTP (249 aa)). Positions 115-154 (MNATLKRYQTEHKNKLESLEKSQAELKKIRRKSQGSRNAL) form a coiled coil. Thr-248 and Thr-257 each carry phosphothreonine. Phosphoserine is present on residues Ser-261 and Ser-281. The disordered stretch occupies residues 302–328 (NNPATAAPNSQRVNNSTGTSEDPSLQR). Polar residues predominate over residues 303–328 (NPATAAPNSQRVNNSTGTSEDPSLQR). Phosphoserine occurs at positions 331 and 354. An SH3 domain is found at 339–402 (MKKQKVKTIF…PSSYTKLLEE (64 aa)). The residue at position 412 (Thr-412) is a Phosphothreonine. Residues Ser-414, Ser-420, and Ser-422 each carry the phosphoserine modification. Residues 451–511 (RRADSARTTS…TNDRSAPIIR (61 aa)) are disordered. A binds F-actin region spans residues 483–511 (PPFLSGENPFATVKLRPTVTNDRSAPIIR).

Interacts with RAC1. Binds to F-actin. Interacts with FASLG. Interacts (via SH3 domain) with E.coli effector protein EspF(U) (via PXXP motifs). Identified in a complex containing at least WASL, BAIAP2L1 and E.coli EspF(U). Interacts with E.coli intimin receptor Tir. Post-translationally, phosphorylated on tyrosine in response to insulin.

It localises to the cytoplasm. It is found in the cytoskeleton. Its function is as follows. May function as adapter protein. Involved in the formation of clusters of actin bundles. Plays a role in the reorganization of the actin cytoskeleton in response to bacterial infection. The sequence is that of BAR/IMD domain-containing adapter protein 2-like 1 (BAIAP2L1) from Homo sapiens (Human).